Consider the following 155-residue polypeptide: Ribosomal RNA large subunit methyltransferase H (155 aa).

S-adenosyl-L-methionine is bound by residues Leu73, Gly104, and 123 to 128 (LSPLTL).

It belongs to the RNA methyltransferase RlmH family. Homodimer.

It is found in the cytoplasm. It catalyses the reaction pseudouridine(1915) in 23S rRNA + S-adenosyl-L-methionine = N(3)-methylpseudouridine(1915) in 23S rRNA + S-adenosyl-L-homocysteine + H(+). Its function is as follows. Specifically methylates the pseudouridine at position 1915 (m3Psi1915) in 23S rRNA. The sequence is that of Ribosomal RNA large subunit methyltransferase H from Pseudomonas aeruginosa (strain UCBPP-PA14).